The following is a 394-amino-acid chain: 4-hydroxybenzoate 3-monooxygenase (NAD(P)H) (394 aa).

FAD-binding positions include Glu-32, 42 to 47, and Gln-102; that span reads TIRAGV. Substrate-binding positions include Tyr-203, 214–216, and Tyr-224; that span reads STR. Asp-288 provides a ligand contact to FAD. Substrate is bound at residue Pro-295. 301 to 302 is a binding site for FAD; the sequence is LN.

Belongs to the aromatic-ring hydroxylase family. FAD is required as a cofactor.

It carries out the reaction 4-hydroxybenzoate + NADH + O2 + H(+) = 3,4-dihydroxybenzoate + NAD(+) + H2O. The enzyme catalyses 4-hydroxybenzoate + NADPH + O2 + H(+) = 3,4-dihydroxybenzoate + NADP(+) + H2O. Involved in the degradation of 4-hydroxybenzoate (4HB) via the protocatechuate (PCA) 2,3-cleavage pathway. Catalyzes the conversion of 4HB into 2-hydroxypenta-2,4-dienoate (HPD). It is highly specific for 4-hydroxybenzoate, and is able to utilize both NADH and NADPH as electron donors at approximately equal rates. This Paenibacillus sp protein is 4-hydroxybenzoate 3-monooxygenase (NAD(P)H) (praI).